The sequence spans 33 residues: Fatty acid-binding protein, intestinal (33 aa).

This sequence belongs to the calycin superfamily. Fatty-acid binding protein (FABP) family. Intestine.

The protein resides in the cytoplasm. Its function is as follows. FABPs are thought to play a role in the intracellular transport of long-chain fatty acids and their acyl-CoA esters. In Rhamdia sapo (South American catfish), this protein is Fatty acid-binding protein, intestinal (fabp2).